The chain runs to 833 residues: Serine/threonine-protein phosphatase 4 regulatory subunit 3A (833 aa).

The 100-residue stretch at 1–100 folds into the WH1 domain; the sequence is MTDTRRRVKV…DEIWEKICQV (100 aa). Phosphoserine occurs at positions 117 and 127. At Lys655 the chain carries N6-acetyllysine. Positions 683 to 694 are enriched in acidic residues; it reads FNTDEDDMEDGE. Disordered stretches follow at residues 683–712 and 733–833; these read FNTD…IMDP and KTNL…KFDS. Ser698, Ser741, Ser768, Ser771, Ser774, Ser777, and Ser780 each carry phosphoserine. Residues 734–751 are compositionally biased toward polar residues; sequence TNLSGRQSPSFKLSLSSG. Positions 752 to 768 are enriched in low complexity; that stretch reads TKTNLTSQSSTTNLPGS. The segment covering 785–794 has biased composition (polar residues); sequence PKNTSQTAAI. The segment covering 806–820 has biased composition (acidic residues); it reads YPDDDEDDDEDEDKE.

Belongs to the SMEK family. As to quaternary structure, serine/threonine-protein phosphatase 4 (PP4) occurs in different assemblies of the catalytic and one or more regulatory subunits. Component of the PP4 complex PPP4C-PPP4R2-PPP4R3A. Interacts with PPP4C; the interaction requires PPP4R2.

The protein localises to the cytoplasm. Its subcellular location is the cytoskeleton. It is found in the microtubule organizing center. It localises to the centrosome. The protein resides in the nucleus. Regulatory subunit of serine/threonine-protein phosphatase 4. May regulate the activity of PPP4C at centrosomal microtubule organizing centers. The PPP4C-PPP4R2-PPP4R3A PP4 complex specifically dephosphorylates H2AX phosphorylated on 'Ser-140' (gamma-H2AX) generated during DNA replication and required for DNA DSB repair. This Homo sapiens (Human) protein is Serine/threonine-protein phosphatase 4 regulatory subunit 3A.